The primary structure comprises 576 residues: Arginine--tRNA ligase (576 aa).

Positions 122–132 (PNVAKEMHVGH) match the 'HIGH' region motif.

This sequence belongs to the class-I aminoacyl-tRNA synthetase family. In terms of assembly, monomer.

The protein localises to the cytoplasm. The enzyme catalyses tRNA(Arg) + L-arginine + ATP = L-arginyl-tRNA(Arg) + AMP + diphosphate. The protein is Arginine--tRNA ligase of Hamiltonella defensa subsp. Acyrthosiphon pisum (strain 5AT).